A 281-amino-acid chain; its full sequence is NADPH-dependent 7-cyano-7-deazaguanine reductase (281 aa).

Substrate is bound at residue 81–83 (IES). 83–84 (SK) serves as a coordination point for NADPH. C188 acts as the Thioimide intermediate in catalysis. D195 (proton donor) is an active-site residue. 227–228 (HE) contributes to the substrate binding site. 256-257 (RG) is a binding site for NADPH.

This sequence belongs to the GTP cyclohydrolase I family. QueF type 2 subfamily. Homodimer.

Its subcellular location is the cytoplasm. The enzyme catalyses 7-aminomethyl-7-carbaguanine + 2 NADP(+) = 7-cyano-7-deazaguanine + 2 NADPH + 3 H(+). It participates in tRNA modification; tRNA-queuosine biosynthesis. Its function is as follows. Catalyzes the NADPH-dependent reduction of 7-cyano-7-deazaguanine (preQ0) to 7-aminomethyl-7-deazaguanine (preQ1). This Paracidovorax citrulli (strain AAC00-1) (Acidovorax citrulli) protein is NADPH-dependent 7-cyano-7-deazaguanine reductase.